The following is a 241-amino-acid chain: Pyridoxine 5'-phosphate synthase (241 aa).

Asn7 contacts 3-amino-2-oxopropyl phosphate. 9 to 10 serves as a coordination point for 1-deoxy-D-xylulose 5-phosphate; that stretch reads DH. Arg18 serves as a coordination point for 3-amino-2-oxopropyl phosphate. The active-site Proton acceptor is the His43. 1-deoxy-D-xylulose 5-phosphate-binding residues include Arg45 and His50. Glu70 acts as the Proton acceptor in catalysis. Thr100 lines the 1-deoxy-D-xylulose 5-phosphate pocket. His190 functions as the Proton donor in the catalytic mechanism. 3-amino-2-oxopropyl phosphate-binding positions include Gly191 and 212–213; that span reads GH.

The protein belongs to the PNP synthase family. In terms of assembly, homooctamer; tetramer of dimers.

Its subcellular location is the cytoplasm. The enzyme catalyses 3-amino-2-oxopropyl phosphate + 1-deoxy-D-xylulose 5-phosphate = pyridoxine 5'-phosphate + phosphate + 2 H2O + H(+). It functions in the pathway cofactor biosynthesis; pyridoxine 5'-phosphate biosynthesis; pyridoxine 5'-phosphate from D-erythrose 4-phosphate: step 5/5. Functionally, catalyzes the complicated ring closure reaction between the two acyclic compounds 1-deoxy-D-xylulose-5-phosphate (DXP) and 3-amino-2-oxopropyl phosphate (1-amino-acetone-3-phosphate or AAP) to form pyridoxine 5'-phosphate (PNP) and inorganic phosphate. In Bordetella avium (strain 197N), this protein is Pyridoxine 5'-phosphate synthase.